The sequence spans 163 residues: Putative pre-16S rRNA nuclease (163 aa).

Belongs to the YqgF nuclease family.

It localises to the cytoplasm. Functionally, could be a nuclease involved in processing of the 5'-end of pre-16S rRNA. The polypeptide is Putative pre-16S rRNA nuclease (Zymomonas mobilis subsp. mobilis (strain ATCC 31821 / ZM4 / CP4)).